Consider the following 451-residue polypeptide: Deoxyguanosinetriphosphate triphosphohydrolase-like protein (451 aa).

One can recognise an HD domain in the interval 61–274 (RLTHSLEVAQ…MELADDIAYG (214 aa)).

This sequence belongs to the dGTPase family. Type 2 subfamily.

The chain is Deoxyguanosinetriphosphate triphosphohydrolase-like protein from Actinobacillus succinogenes (strain ATCC 55618 / DSM 22257 / CCUG 43843 / 130Z).